Reading from the N-terminus, the 70-residue chain is Small, acid-soluble spore protein I (70 aa).

Belongs to the SspI family.

The protein localises to the spore core. The sequence is that of Small, acid-soluble spore protein I from Bacillus licheniformis (strain ATCC 14580 / DSM 13 / JCM 2505 / CCUG 7422 / NBRC 12200 / NCIMB 9375 / NCTC 10341 / NRRL NRS-1264 / Gibson 46).